We begin with the raw amino-acid sequence, 426 residues long: G2/mitotic-specific cyclin-A (426 aa).

Polar residues predominate over residues 1-11 (MSMVHGSSFQI). The disordered stretch occupies residues 1–22 (MSMVHGSSFQIAQDGENENQGV).

Belongs to the cyclin family. Cyclin AB subfamily.

Functionally, essential for the control of the cell cycle at the G2/M (mitosis) transition. Interacts with the CDC2 and CDK2 protein kinases to form MPF. G2/M cyclins accumulate steadily during G2 and are abruptly destroyed at mitosis. The protein is G2/mitotic-specific cyclin-A of Patella vulgata (Common limpet).